The following is a 498-amino-acid chain: MYSSMASSIRGSTVHLSDRVHSKDELQALNTRLAKYIDKIRNLENENVALQRQLQTAEQTTVTEIHRVSKNYDEELAKLRKQLEDVLRDNARLQMERNSTESENKQLQQRVAQLEKQVRTLEARLRQAEDLVADLQHRLSQSLDVRQQLESDNKDLKNQINSLKGQIQQLKQDYDNERVRTADLENKLQTKEEEHEFEKNALHENLREEKSQRQYLLHDLQRGLQDEFESKLVQQLNELRAEYDEMIKGVRAEVEAKSESRIRDLMAMADQQGDTVTRLQQELEEWRKRSQTTEAELDRLRKENANLNAQLTEIQRQKDDQIRALQQQIRKRQEELQRINDDLGDLTRQYQDLLYVKLALDAELATYNKLLSGEEQRLGMDGSGTVIRRPTGGATGTGSGIYGGTGSGGYSRDIGSTTTTKTTYTSRPTYNYTPIATTPIGGTSTTGRYTPVGGQTLAARQPSPGGSLGRERDIPVLREQKITETFKASGRVGPRTDW.

The interval 18-58 (DRVHSKDELQALNTRLAKYIDKIRNLENENVALQRQLQTAE) is coil 1A. Residues 22–378 (SKDELQALNT…KLLSGEEQRL (357 aa)) form the IF rod domain. Residues 59–69 (QTTVTEIHRVS) form a linker 1 region. Residues 70 to 213 (KNYDEELAKL…ENLREEKSQR (144 aa)) form a coil 1B region. The linker 2 stretch occupies residues 214–231 (QYLLHDLQRGLQDEFESK). Residues 232–371 (LVQQLNELRA…AELATYNKLL (140 aa)) are coil 2. The disordered stretch occupies residues 381–425 (DGSGTVIRRPTGGATGTGSGIYGGTGSGGYSRDIGSTTTTKTTYT). A compositionally biased stretch (gly residues) spans 393–409 (GATGTGSGIYGGTGSGG).

Belongs to the intermediate filament family.

It localises to the cytoplasm. Its subcellular location is the cell cortex. Intermediate filament (IF) protein that forms both short filaments and extensive cytoskeletal networks which most likely are homomeric. Some of the cytotardin arrays display cage-like perinuclear structures, while others are located in the periphery close to the cell membrane. The entire tardigrade body is ensheathed by a grid of belt-like filaments formed by the cytotardin protein, which retain their integrity even in contracted specimens. The belt-like structures encircling each epidermal cell might help to resist the shearing forces that arise during freezing and thawing cycles, whereas the dense meshwork at the basis of each claw and around the stylets might provide the tissue stability necessary for locomotion and feeding. This chain is Cytotardin, found in Hypsibius exemplaris (Freshwater tardigrade).